The chain runs to 332 residues: DNA packaging protein (332 aa).

The segment at 1–207 is ATPase; it reads MDKSLFYNPQ…SERRKTRFGR (207 aa). 24-31 is an ATP binding site; that stretch reads GARGIGKS. The interval 233 to 332 is DNA-binding; the sequence is KRSKDSKFVF…YELFRKMRIQ (100 aa).

This sequence belongs to the phi29likevirus gp16 family. In terms of assembly, homopentamer. Interacts with the packaging RNA (pRNA). Part of a DNA-gp3-gp16 complex.

The enzyme catalyses ATP + H2O = ADP + phosphate + H(+). ATPase required for the genome encapsidation reaction. Part of the active packaging motor via the binding to the packaging RNA (pRNA), itself fixed to the head-tail connector at the unique portal vertex of the prohead. Binds and supercoils the pre-formed, unit-length DNA bound to gp3 to produce an initiation complex for DNA packaging. Provides the energy to actively pump the viral DNA into the prohead. Approximately one molecule of ATP is used in the packaging of 2 bp of viral DNA. ATP hydrolysis results in a conformational change that causes the arginine/lysine finger of one subunit to move into the active site of its neighbor, where it interacts with the negatively charged oxygens on the gamma-phosphate of ATP. After packaging, the ATPase and the pRNA are released from the prohead. The sequence is that of DNA packaging protein (16) from Bacillus phage phi29 (Bacteriophage phi-29).